A 392-amino-acid polypeptide reads, in one-letter code: Tryptophan synthase beta chain 1 (392 aa).

Lys-85 is subject to N6-(pyridoxal phosphate)lysine.

Belongs to the TrpB family. Tetramer of two alpha and two beta chains. It depends on pyridoxal 5'-phosphate as a cofactor.

The catalysed reaction is (1S,2R)-1-C-(indol-3-yl)glycerol 3-phosphate + L-serine = D-glyceraldehyde 3-phosphate + L-tryptophan + H2O. It participates in amino-acid biosynthesis; L-tryptophan biosynthesis; L-tryptophan from chorismate: step 5/5. In terms of biological role, the beta subunit is responsible for the synthesis of L-tryptophan from indole and L-serine. The polypeptide is Tryptophan synthase beta chain 1 (trpB1) (Methanothermobacter thermautotrophicus (strain ATCC 29096 / DSM 1053 / JCM 10044 / NBRC 100330 / Delta H) (Methanobacterium thermoautotrophicum)).